A 1319-amino-acid polypeptide reads, in one-letter code: ERAD-associated E3 ubiquitin-protein ligase DOA10 (1319 aa).

Met-1 is subject to N-acetylmethionine. The Cytoplasmic segment spans residues 1 to 131 (MDVDSDVNVS…LTFFEKARLA (131 aa)). The segment at 31 to 100 (DDAPSGATCR…DICHYPIQFK (70 aa)) adopts an RING-CH-type zinc-finger fold. Zn(2+) contacts are provided by Cys-39, Cys-42, Cys-56, Cys-58, His-66, Cys-69, Cys-90, and Cys-93. The helical transmembrane segment at 132–152 (LTIGLAAVLYIIGVPLVWNMF) threads the bilayer. The Lumenal segment spans residues 153 to 203 (GKLYTMMLDGSSPYPGDFLKSLIYGYDQSATPELTTRAIFYQLLQNHSFTS). Residues 204 to 224 (LQFIMIVILHIALYFQYDMIV) form a helical membrane-spanning segment. Residues 225–468 (REDVFSKMVF…GPLVINLKLK (244 aa)) lie on the Cytoplasmic side of the membrane. A compositionally biased stretch (low complexity) spans 291 to 306 (ADNNNNVINPRNDNVP). Disordered stretches follow at residues 291–315 (ADNN…DHRN) and 329–381 (EATE…EADY). The chain crosses the membrane as a helical span at residues 469-489 (LLNVIAYFIIAVVFTAIYLAI). Residues 490–491 (SY) are Lumenal-facing. The chain crosses the membrane as a helical span at residues 492 to 512 (LFPTFIGFGLLKIYFGIFKVI). Topologically, residues 513-626 (LRGLCHLYYL…LFALKCTFKV (114 aa)) are cytoplasmic. Residues 627–647 (FTLFFIELAGFPILAGVMLDF) form a helical membrane-spanning segment. Residues 648–660 (SLFCPILASNSRM) lie on the Lumenal side of the membrane. A helical transmembrane segment spans residues 661-681 (LWVPSICAIWPPFSLFVYWTI). The Cytoplasmic portion of the chain corresponds to 682–739 (GTLYMYWFAKYIGMIRKNIIRPGVLFFIRSPEDPNIKILHDSLIHPMSIQLSRLCLSM). Residues 740–760 (FIYAIFIVLGFGFHTRIFFPF) form a helical membrane-spanning segment. At 761–777 (MLKSNLLSVPEAYKPTS) the chain is on the lumenal side. The chain crosses the membrane as a helical span at residues 778 to 797 (IISWKFNTILLTLYFTKRIL). At 798 to 965 (ESSSYVKPLL…YVPPDFRLRY (168 aa)) the chain is on the cytoplasmic side. A helical transmembrane segment spans residues 966 to 986 (MTLLGLVWLFASILMLGVTFI). At 987–1019 (SQALINFVCSFGFLPVVKLLLGERNKVYVAWKE) the chain is on the lumenal side. Residues 1020-1040 (LSDISYSYLNIYYVCVGSVCL) traverse the membrane as a helical segment. The Cytoplasmic segment spans residues 1041-1113 (SKIAKDILHF…IFDSMLVKYN (73 aa)). The chain crosses the membrane as a helical span at residues 1114–1134 (LMVFIAIMIAVIRTMVSWVVL). Residues 1135 to 1168 (TDGILACYNYLTIRVFGNSSYTIGNSKWFKYDES) are Lumenal-facing. Residues 1169-1189 (LLFVVWIISSMVNFGTGYKSL) form a helical membrane-spanning segment. The Cytoplasmic segment spans residues 1190 to 1213 (KLFFRNRNTSKLNFLKTMALELFK). A helical transmembrane segment spans residues 1214–1234 (QGFLHMVIYVLPIIILSLVFL). The Lumenal portion of the chain corresponds to 1235–1270 (RDVSTKQIIDISHGSRSFTLSLNESFPTWTRMQDIY). Residues 1271-1291 (FGLLIALESFTFFFQATVLFI) traverse the membrane as a helical segment. The Cytoplasmic portion of the chain corresponds to 1292–1319 (QWFKSTVQNVKDEVYTKGRALENLPDES).

Belongs to the DOA10/MARCH6 family. As to quaternary structure, component of the DOA10 ubiquitin ligase complex which contains E3 ligase SSM4/DOA10 and CDC48-binding protein UBX2/SEL1. The DOA10 complex interacts with the heterotrimeric CDC48-NPL4-UFD1 ATPase complex which is recruited by UBX2/SEL1 via its interaction with CDC48. Interacts with its associated ubiquitin conjugating enzymes UBC6 and UBC7 with its membrane anchor CUE1. Interacts with PEX29.

It is found in the endoplasmic reticulum membrane. The protein localises to the nucleus inner membrane. The enzyme catalyses S-ubiquitinyl-[E2 ubiquitin-conjugating enzyme]-L-cysteine + [acceptor protein]-L-lysine = [E2 ubiquitin-conjugating enzyme]-L-cysteine + N(6)-ubiquitinyl-[acceptor protein]-L-lysine.. Its pathway is protein modification; protein ubiquitination. Functionally, E3 ubiquitin-protein ligase which accepts ubiquitin specifically from endoplasmic reticulum-associated UBC6 and UBC7 E2 ligases, and transfers it to substrates promoting their degradation. Mediates the degradation of a broad range of substrates, including endoplasmic reticulum membrane proteins (ERQC), soluble nuclear proteins and soluble cytoplasmic proteins (CytoQC). Component of the DOA10 ubiquitin ligase complex, which is part of the ERAD-C pathway responsible for the rapid degradation of membrane proteins with misfolded cytoplasmic domains. ERAD-C substrates are ubiquitinated through DOA10 in conjunction with the E2 ubiquitin-conjugating enzymes UBC6 and UBC7-CUE1. Ubiquitinated substrates are then removed to the cytosol via the action of the UFD1-NPL4-CDC48/p97 (UNC) AAA ATPase complex and targeted to the proteasome. Also recognizes the N-terminally acetylated residue of proteins as degradation signal (degron). N-terminally acetylated target proteins include MATALPHA2, TBF1, SLK19, YMR090W, HIS3, HSP104, UBP6 and ARO8. Catalyzes ubiquitination of mislocalized tail-anchored proteins that are extracted from the mitochondrion membrane by MSP1: following extraction, mistargeted proteins are transferred to the endoplasmic reticulum, where they are ubiquitinated by DOA10 and degraded by the proteasome. The protein is ERAD-associated E3 ubiquitin-protein ligase DOA10 (SSM4) of Saccharomyces cerevisiae (strain ATCC 204508 / S288c) (Baker's yeast).